A 198-amino-acid polypeptide reads, in one-letter code: Recombination protein RecR (198 aa).

A C4-type zinc finger spans residues 57 to 72 (CSVCGHITENDPCYIC). The region spanning 80 to 175 (SVICVVEDDK…KVTRLAQGLS (96 aa)) is the Toprim domain.

This sequence belongs to the RecR family.

May play a role in DNA repair. It seems to be involved in an RecBC-independent recombinational process of DNA repair. It may act with RecF and RecO. The chain is Recombination protein RecR from Staphylococcus epidermidis (strain ATCC 35984 / DSM 28319 / BCRC 17069 / CCUG 31568 / BM 3577 / RP62A).